The chain runs to 72 residues: Disintegrin basilicin (72 aa).

One can recognise a Disintegrin domain in the interval 1 to 72 (AGEECDCGSP…ADCPRNHFHA (72 aa)). 6 disulfide bridges follow: Cys-5-Cys-20, Cys-7-Cys-15, Cys-14-Cys-37, Cys-28-Cys-34, Cys-33-Cys-58, and Cys-46-Cys-65. The Cell attachment site motif lies at 50–52 (RGD).

It belongs to the venom metalloproteinase (M12B) family. P-II subfamily. P-IIa sub-subfamily. As to quaternary structure, monomer (disintegrin). In terms of tissue distribution, expressed by the venom gland.

It is found in the secreted. Functionally, inhibits fibrinogen interaction with platelets. Acts by binding to alpha-IIb/beta-3 (ITGA2B/ITGB3) on the platelet surface and inhibits aggregation induced by ADP, thrombin, platelet-activating factor and collagen. The chain is Disintegrin basilicin from Crotalus basiliscus (Mexican west-coast rattlesnake).